Reading from the N-terminus, the 302-residue chain is MDTQAVRAYLLDLQDRITTAASALDGGTFVTDAWEKPPTERLRGSGRTRILEGGALLERGGVGFSHVMGDTLPPSATANRPELAGRGFEAMGVSLVFHPRNPYVPTVHMNVRCFVAVRSDAAPVWWFGGGMDLTPYYGFTEDASHFHRTCQGALAPYGDELYPRFKQWCDDYFYLKHRKEARGIGGIFFDDFAELGFERSFEMMRSVGDAFLPAWLPIAEQRHATAYGERERAFQAYRRGRYVEFNLVFDRGTLFGLQSGGRAESILMSMPPVANWRYDWQPEPGSPEAALYTDFLPARDWV.

Substrate is bound at residue S94. Residues H98 and H108 each contribute to the a divalent metal cation site. Residue H108 is the Proton donor of the active site. 110-112 (NVR) is a substrate binding site. A divalent metal cation contacts are provided by H147 and H177. Residues 242–277 (YVEFNLVFDRGTLFGLQSGGRAESILMSMPPVANWR) form an important for dimerization region. 260–262 (GGR) contacts substrate.

Belongs to the aerobic coproporphyrinogen-III oxidase family. As to quaternary structure, homodimer. The cofactor is a divalent metal cation.

The protein localises to the cytoplasm. It carries out the reaction coproporphyrinogen III + O2 + 2 H(+) = protoporphyrinogen IX + 2 CO2 + 2 H2O. It participates in porphyrin-containing compound metabolism; protoporphyrin-IX biosynthesis; protoporphyrinogen-IX from coproporphyrinogen-III (O2 route): step 1/1. In terms of biological role, involved in the heme biosynthesis. Catalyzes the aerobic oxidative decarboxylation of propionate groups of rings A and B of coproporphyrinogen-III to yield the vinyl groups in protoporphyrinogen-IX. This chain is Oxygen-dependent coproporphyrinogen-III oxidase, found in Ralstonia pickettii (strain 12J).